Reading from the N-terminus, the 649-residue chain is ABC transporter G family member 5 (649 aa).

The region spanning 42–284 (VKTEEESLKL…LRSNGLHPPL (243 aa)) is the ABC transporter domain. Position 80-87 (80-87 (GPSGAGKS)) interacts with ATP. The segment at 308–336 (SRRAAHVLTPQTTLQEKRSEDSQGESKSG) is disordered. The 211-residue stretch at 371–581 (EETMILTHRF…PFEGFLINEF (211 aa)) folds into the ABC transmembrane type-2 domain. Transmembrane regions (helical) follow at residues 390 to 410 (LFAC…LIFH), 425 to 445 (LFAF…PIFL), 474 to 494 (LPFL…LVGL), 506 to 526 (LLIW…SALV), 529 to 549 (FIVG…FSGY), and 617 to 637 (VVIM…ILRC).

This sequence belongs to the ABC transporter superfamily. ABCG family. Eye pigment precursor importer (TC 3.A.1.204) subfamily.

The protein localises to the membrane. The sequence is that of ABC transporter G family member 5 (ABCG5) from Arabidopsis thaliana (Mouse-ear cress).